We begin with the raw amino-acid sequence, 77 residues long: Large ribosomal subunit protein eL20 (77 aa).

It belongs to the eukaryotic ribosomal protein eL20 family. In terms of assembly, part of the 50S ribosomal subunit. Binds 23S rRNA.

The polypeptide is Large ribosomal subunit protein eL20 (Thermococcus onnurineus (strain NA1)).